The following is a 313-amino-acid chain: Type II methyltransferase M.NlaX (313 aa).

The region spanning 2-308 (FKIIDLFAGI…EQMKAALSAV (307 aa)) is the SAM-dependent MTase C5-type domain. The active site involves Cys74.

Belongs to the class I-like SAM-binding methyltransferase superfamily. C5-methyltransferase family.

The catalysed reaction is a 2'-deoxycytidine in DNA + S-adenosyl-L-methionine = a 5-methyl-2'-deoxycytidine in DNA + S-adenosyl-L-homocysteine + H(+). Functionally, a methylase, recognizes the double-stranded sequence 5'-CCNGG-3' and methylates C-2 on both strands. May be the equivalent of dcm in this bacteria, or it may protect the DNA from cleavage by the putative NlaXP endonuclease. This chain is Type II methyltransferase M.NlaX (nlaXM), found in Neisseria lactamica.